A 495-amino-acid chain; its full sequence is Internal alternative NAD(P)H-ubiquinone oxidoreductase A1, mitochondrial (495 aa).

A mitochondrion-targeting transit peptide spans 1 to 41 (MPWFKNLIKISKTITNQSSSYKSITPLASPLLAQFLQFTKQ). 61-91 (RIVVLGSGWAGCRLMKDIDTNIYDVVCVSPR) contributes to the FAD binding site. Residue 228–264 (LHCVVVGGGPTGVEFSGELSDFILKDVHQRYAHVKDY) participates in NAD(+) binding. Residues 486 to 495 (LVFGRDISRI) carry the Microbody targeting signal motif.

The protein belongs to the NADH dehydrogenase family. The cofactor is FAD.

The protein resides in the mitochondrion inner membrane. The protein localises to the peroxisome. It carries out the reaction a quinone + NADH + H(+) = a quinol + NAD(+). The catalysed reaction is a ubiquinone + NADH + H(+) = a ubiquinol + NAD(+). In terms of biological role, alternative NADH-ubiquinone oxidoreductase which catalyzes the oxidation of mitochondrial NADH does not translocate protons across the inner mitochondrial membrane. The chain is Internal alternative NAD(P)H-ubiquinone oxidoreductase A1, mitochondrial (NDA1) from Solanum tuberosum (Potato).